Here is a 272-residue protein sequence, read N- to C-terminus: Transformer-2 sex-determining protein (272 aa).

Disordered regions lie at residues 21–102 (KHKC…DHPQ) and 182–272 (ITQR…QSRY). Residues 26–41 (HSSATSSPSSAASSES) show a composition bias toward low complexity. The segment covering 87-102 (TSRDRQRMRQARDHPQ) has biased composition (basic and acidic residues). The RRM domain occupies 105-183 (RCIGVFGLNT…RRIRVDYSIT (79 aa)). The segment at 184 to 204 (QRAHTPTPGVYMGRPSRPLGR) is linker. A compositionally biased stretch (basic and acidic residues) spans 205 to 218 (RSRERDYSTRDTSR). The segment covering 238–266 (RKYRSRHRYDRSRSRTRSYSRSRSPRKPV) has biased composition (basic residues).

This sequence belongs to the splicing factor SR family. In terms of processing, extensively phosphorylated on serine residues in the RS domain.

Required for female sex determination in somatic cells and for spermatogenesis in male germ cells. Positive regulator of female-specific splicing and/or polyadenylation of doublesex (dsx) pre-mRNA. Splicing requires an enhancer complex, dsxRE (dsx repeat element: which contains six copies of a 13-nucleotide repeat and a purine-rich enhancer (PRE)). DsxRE is formed through cooperative interactions between tra, tra2 and the sr proteins, and these interactions require both the repeat sequences and PRE. PRE is required for specific binding of tra2 to the dsxRE. Protein-RNA and protein-protein interactions are involved in tra-2 dependent activation and repression of alternative splicing. The polypeptide is Transformer-2 sex-determining protein (tra2) (Drosophila virilis (Fruit fly)).